A 464-amino-acid polypeptide reads, in one-letter code: Signal recognition particle 54 kDa protein (464 aa).

GTP is bound by residues 104-111, 184-188, and 242-245; these read GLQGSGKT, DTAGR, and TKLD.

The protein belongs to the GTP-binding SRP family. SRP54 subfamily. Part of the signal recognition particle protein translocation system, which is composed of SRP and FtsY. Archaeal SRP consists of a 7S RNA molecule of 300 nucleotides and two protein subunits: SRP54 and SRP19.

It localises to the cytoplasm. The catalysed reaction is GTP + H2O = GDP + phosphate + H(+). In terms of biological role, involved in targeting and insertion of nascent membrane proteins into the cytoplasmic membrane. Binds to the hydrophobic signal sequence of the ribosome-nascent chain (RNC) as it emerges from the ribosomes. The SRP-RNC complex is then targeted to the cytoplasmic membrane where it interacts with the SRP receptor FtsY. The sequence is that of Signal recognition particle 54 kDa protein from Halorubrum lacusprofundi (strain ATCC 49239 / DSM 5036 / JCM 8891 / ACAM 34).